We begin with the raw amino-acid sequence, 264 residues long: DNA-directed RNA polymerase subunit Rpo3 (264 aa).

The [3Fe-4S] cluster site is built by Cys203, Cys206, and Cys209.

This sequence belongs to the archaeal Rpo3/eukaryotic RPB3 RNA polymerase subunit family. Part of the RNA polymerase complex. It depends on [3Fe-4S] cluster as a cofactor.

The protein localises to the cytoplasm. The enzyme catalyses RNA(n) + a ribonucleoside 5'-triphosphate = RNA(n+1) + diphosphate. In terms of biological role, DNA-dependent RNA polymerase (RNAP) catalyzes the transcription of DNA into RNA using the four ribonucleoside triphosphates as substrates. The chain is DNA-directed RNA polymerase subunit Rpo3 from Archaeoglobus fulgidus (strain ATCC 49558 / DSM 4304 / JCM 9628 / NBRC 100126 / VC-16).